Here is a 105-residue protein sequence, read N- to C-terminus: Small ribosomal subunit protein uS10 (105 aa).

It belongs to the universal ribosomal protein uS10 family. As to quaternary structure, part of the 30S ribosomal subunit.

Its function is as follows. Involved in the binding of tRNA to the ribosomes. The chain is Small ribosomal subunit protein uS10 from Acaryochloris marina (strain MBIC 11017).